The following is a 562-amino-acid chain: Potassium-transporting ATPase potassium-binding subunit (562 aa).

Transmembrane regions (helical) follow at residues Phe6–Phe26, Tyr62–Met82, Gly132–Ile152, Leu175–Leu195, Phe253–Val273, Leu283–Leu303, Phe327–Val347, Ala356–Val376, Gly379–Gly399, Met416–Leu436, Leu483–Ile503, and Gly524–Ile544.

It belongs to the KdpA family. In terms of assembly, the system is composed of three essential subunits: KdpA, KdpB and KdpC.

The protein resides in the cell inner membrane. Functionally, part of the high-affinity ATP-driven potassium transport (or Kdp) system, which catalyzes the hydrolysis of ATP coupled with the electrogenic transport of potassium into the cytoplasm. This subunit binds the periplasmic potassium ions and delivers the ions to the membrane domain of KdpB through an intramembrane tunnel. The sequence is that of Potassium-transporting ATPase potassium-binding subunit from Yersinia pestis bv. Antiqua (strain Antiqua).